The primary structure comprises 171 residues: Large ribosomal subunit protein bL9 (171 aa).

Belongs to the bacterial ribosomal protein bL9 family.

In terms of biological role, binds to the 23S rRNA. The protein is Large ribosomal subunit protein bL9 of Rickettsia rickettsii (strain Iowa).